Consider the following 108-residue polypeptide: Large ribosomal subunit protein eL36x (108 aa).

Disordered stretches follow at residues 13–34 (GHVVTKREQPPRPNNRKGKTSK) and 75–108 (KLGTHKRAKRKREEMSSVLRKMRSGGAGASEKKK). Positions 75–84 (KLGTHKRAKR) are enriched in basic residues.

This sequence belongs to the eukaryotic ribosomal protein eL36 family.

This Arabidopsis thaliana (Mouse-ear cress) protein is Large ribosomal subunit protein eL36x (RPL36C).